The following is a 333-amino-acid chain: MTGRFVRDQSAMTKAIASSGKAGQETTKQTTSAEKLESENALLSTVKEMNQGWMSRLGAGNDYDETEADPADTYGDTEADLPPTIKPEHIKKETRKQDKALGIKNVAGTSESERKALKQWDEDENKSDTEKLAFLAGFRYRQDHNSVVLRAQTEQLKSLVDILTSSATSVSRAASDIVNATTMSTSKLAAAITKHIEVPPHETLTKIEMPKLPLISSEAGSISGVKSVDGKSVDEEIIDSNKKESTRIKEEAKTPKPQIVTPPVIDSGPIITVGQMASVLGGEVKDILEFYEIGMEKFESVAKDLGLSYEGLLRKYGGLSGLKGTLKKKINLL.

Disordered stretches follow at residues 1 to 41 and 57 to 84; these read MTGR…SENA and LGAG…LPPT. Residues 24–33 are compositionally biased toward polar residues; that stretch reads QETTKQTTSA. The segment covering 62–79 has biased composition (acidic residues); the sequence is DYDETEADPADTYGDTEA.

The chain is Protein 2 from Lactuca sativa (Garden lettuce).